The chain runs to 761 residues: MAMQEKYPNDRSHATSPGSNVIQKGSSLGTEWQTPVISETFRSRFSRCSSIADSGDTAIGTSCSDIAEDFCSSSGSPSFQPIKSHITIPTAHVMPSTLGASPAKPNSAPSGPSSAKLPLSGLTEGVGMTRNGDFGAVKRSPGLARDFMYLPSAAGENGSQQSWFPAVGHEREGEMRKFDVPSMESTLNQPAMLETLYSDPHYRAHFPNPRPDTNKDVYKVLPESKKAPGSGAVFERNGPHASSSGVLPLGLQPAPGLSKSLSSQVWQPSPDPWHPGEQSCELSTCRQQLELIRLQMEQMQLQNGAMCHHPAAFAPLLPTLEPAQWLSILNSNEHLLKEKELLIDKQRKHISQLEQKVRESELQVHSALLGRPAPFGDVCLLRLQELQRENTFLRAQFAQKTEALSKEKMELEKKLSASEVEIQLIRESLKVTLQKHSEEGKKQEERVKGRDKHINNLKKKCQKESEQNREKQQRIETLERYLADLPTLEDHQKQTEQLKDAELKNTELQERVAELETLLEDTQATCREKEVQLESLRQREADLSSARHSFQDKQSVEEANGENLRVDMESQQKECDSLRKMVERQQLKMEQLHSQVQSQKQELAQEEGINQALREEAQRRETALQQMRTAVKELSVQNQDLIEKNLTLQEHLRQAQPGSSSSPDSAQLACELHQELASCLQDLQAVCSIVTQRAQGHNPNLSLLLGIHSTQHPGTQLDLQKPDVIRRKLEEVQQLRHDIEDLRTSLSDRYAQDMGENCATQ.

Disordered stretches follow at residues 1-33 and 95-117; these read MAMQ…TEWQ and PSTL…SAKL. The segment covering 14–33 has biased composition (polar residues); it reads ATSPGSNVIQKGSSLGTEWQ. A Phosphoserine modification is found at Ser-16. Ser-140 bears the Phosphoserine mark. Disordered regions lie at residues 226–279 and 435–472; these read KAPG…GEQS and KHSE…REKQ. A mediates interaction with NEK2 and is required for its function in the suppression of centrosome disjunction region spans residues 256–432; it reads GLSKSLSSQV…QLIRESLKVT (177 aa). Coiled coils occupy residues 333-656 and 723-749; these read EHLL…RQAQ and DVIR…LSDR. A required for centrosome localization and for its function in the suppression of centrosome disjunction region spans residues 433 to 475; sequence LQKHSEEGKKQEERVKGRDKHINNLKKKCQKESEQNREKQQRI. Composition is skewed to basic and acidic residues over residues 435–454 and 462–472; these read KHSE…DKHI and QKESEQNREKQ.

This sequence belongs to the CEP85 family. In terms of assembly, homodimer. Interacts with STIL (via N-terminus); this interaction is essential for robust PLK4 activation and efficient centriole assembly and for PLK4-dependent cell migration. Interacts with PLK4; required for CEP85 to be able to drive centriole duplication and cell migration.

It is found in the cytoplasm. Its subcellular location is the cytoskeleton. The protein resides in the microtubule organizing center. The protein localises to the centrosome. It localises to the spindle pole. It is found in the nucleus. Its subcellular location is the nucleolus. The protein resides in the centriole. The protein localises to the cell cortex. Acts as a regulator of centriole duplication through a direct interaction with STIL, a key factor involved in the early steps of centriole formation. The CEP85-STIL protein complex acts as a modulator of PLK4-driven cytoskeletal rearrangements and directional cell motility. Acts as a negative regulator of NEK2 to maintain the centrosome integrity in interphase. Suppresses centrosome disjunction by inhibiting NEK2 kinase activity. The polypeptide is Centrosomal protein of 85 kDa (Cep85) (Mus musculus (Mouse)).